The primary structure comprises 515 residues: Maturase K (515 aa).

The protein belongs to the intron maturase 2 family. MatK subfamily.

The protein resides in the plastid. It localises to the chloroplast. Its function is as follows. Usually encoded in the trnK tRNA gene intron. Probably assists in splicing its own and other chloroplast group II introns. This chain is Maturase K, found in Picea abies (Norway spruce).